The chain runs to 97 residues: Nucleoid-associated protein Hac_0048 (97 aa).

The protein belongs to the YbaB/EbfC family. Homodimer.

It is found in the cytoplasm. It localises to the nucleoid. Binds to DNA and alters its conformation. May be involved in regulation of gene expression, nucleoid organization and DNA protection. The polypeptide is Nucleoid-associated protein Hac_0048 (Helicobacter acinonychis (strain Sheeba)).